Here is a 249-residue protein sequence, read N- to C-terminus: 4-hydroxy-tetrahydrodipicolinate reductase (249 aa).

Residues aspartate 32, 74-76, and 99-102 each bind NAD(+); these read GTT and SANF. Residue histidine 134 is the Proton donor/acceptor of the active site. (S)-2,3,4,5-tetrahydrodipicolinate is bound at residue histidine 135. Residue lysine 138 is the Proton donor of the active site. 144–145 provides a ligand contact to (S)-2,3,4,5-tetrahydrodipicolinate; the sequence is GT.

This sequence belongs to the DapB family.

It localises to the cytoplasm. It catalyses the reaction (S)-2,3,4,5-tetrahydrodipicolinate + NAD(+) + H2O = (2S,4S)-4-hydroxy-2,3,4,5-tetrahydrodipicolinate + NADH + H(+). The enzyme catalyses (S)-2,3,4,5-tetrahydrodipicolinate + NADP(+) + H2O = (2S,4S)-4-hydroxy-2,3,4,5-tetrahydrodipicolinate + NADPH + H(+). The protein operates within amino-acid biosynthesis; L-lysine biosynthesis via DAP pathway; (S)-tetrahydrodipicolinate from L-aspartate: step 4/4. Catalyzes the conversion of 4-hydroxy-tetrahydrodipicolinate (HTPA) to tetrahydrodipicolinate. The polypeptide is 4-hydroxy-tetrahydrodipicolinate reductase (Chlorobaculum parvum (strain DSM 263 / NCIMB 8327) (Chlorobium vibrioforme subsp. thiosulfatophilum)).